A 206-amino-acid chain; its full sequence is Cytochrome c oxidase subunit 3 (206 aa).

Helical transmembrane passes span 26–46 (FLGF…FFGT), 68–88 (LVFI…LAMF), 97–117 (AMMI…GFEI), 143–163 (LVGL…VLLI), and 185–205 (WHFI…MGVG).

Belongs to the cytochrome c oxidase subunit 3 family.

It is found in the cell membrane. It catalyses the reaction 4 Fe(II)-[cytochrome c] + O2 + 8 H(+)(in) = 4 Fe(III)-[cytochrome c] + 2 H2O + 4 H(+)(out). In Alkalihalophilus pseudofirmus (strain ATCC BAA-2126 / JCM 17055 / OF4) (Bacillus pseudofirmus), this protein is Cytochrome c oxidase subunit 3 (ctaE).